A 247-amino-acid polypeptide reads, in one-letter code: Type III pantothenate kinase (247 aa).

7-14 lines the ATP pocket; that stretch reads AIGNSRWH. Substrate is bound by residues tyrosine 91 and 95–98; that span reads GLDR. Aspartate 97 functions as the Proton acceptor in the catalytic mechanism. Aspartate 117 contacts K(+). An ATP-binding site is contributed by threonine 120. Position 172 (threonine 172) interacts with substrate.

It belongs to the type III pantothenate kinase family. In terms of assembly, homodimer. NH4(+) is required as a cofactor. It depends on K(+) as a cofactor.

The protein resides in the cytoplasm. It catalyses the reaction (R)-pantothenate + ATP = (R)-4'-phosphopantothenate + ADP + H(+). The protein operates within cofactor biosynthesis; coenzyme A biosynthesis; CoA from (R)-pantothenate: step 1/5. In terms of biological role, catalyzes the phosphorylation of pantothenate (Pan), the first step in CoA biosynthesis. This Synechococcus elongatus (strain ATCC 33912 / PCC 7942 / FACHB-805) (Anacystis nidulans R2) protein is Type III pantothenate kinase.